The sequence spans 459 residues: Bifunctional protein GlmU (459 aa).

Residues 1–229 form a pyrophosphorylase region; sequence MSNYAIILAA…FDESLGVNDR (229 aa). UDP-N-acetyl-alpha-D-glucosamine-binding positions include 8 to 11, K22, Q72, and 77 to 78; these read LAAG and GT. D102 contributes to the Mg(2+) binding site. The UDP-N-acetyl-alpha-D-glucosamine site is built by G139, E154, N169, and N227. Mg(2+) is bound at residue N227. The tract at residues 230–250 is linker; the sequence is VALATAEKVMRHRIARQHMVN. The tract at residues 251 to 459 is N-acetyltransferase; the sequence is GVTVVNPDSA…NKKPHHPSQK (209 aa). UDP-N-acetyl-alpha-D-glucosamine-binding residues include R332 and K350. The Proton acceptor role is filled by H362. 2 residues coordinate UDP-N-acetyl-alpha-D-glucosamine: Y365 and N376. Residues A379, 385–386, S404, A422, and R439 each bind acetyl-CoA; that span reads NY.

The protein in the N-terminal section; belongs to the N-acetylglucosamine-1-phosphate uridyltransferase family. It in the C-terminal section; belongs to the transferase hexapeptide repeat family. As to quaternary structure, homotrimer. Mg(2+) is required as a cofactor.

It is found in the cytoplasm. It carries out the reaction alpha-D-glucosamine 1-phosphate + acetyl-CoA = N-acetyl-alpha-D-glucosamine 1-phosphate + CoA + H(+). It catalyses the reaction N-acetyl-alpha-D-glucosamine 1-phosphate + UTP + H(+) = UDP-N-acetyl-alpha-D-glucosamine + diphosphate. Its pathway is nucleotide-sugar biosynthesis; UDP-N-acetyl-alpha-D-glucosamine biosynthesis; N-acetyl-alpha-D-glucosamine 1-phosphate from alpha-D-glucosamine 6-phosphate (route II): step 2/2. It functions in the pathway nucleotide-sugar biosynthesis; UDP-N-acetyl-alpha-D-glucosamine biosynthesis; UDP-N-acetyl-alpha-D-glucosamine from N-acetyl-alpha-D-glucosamine 1-phosphate: step 1/1. It participates in bacterial outer membrane biogenesis; LPS lipid A biosynthesis. Its function is as follows. Catalyzes the last two sequential reactions in the de novo biosynthetic pathway for UDP-N-acetylglucosamine (UDP-GlcNAc). The C-terminal domain catalyzes the transfer of acetyl group from acetyl coenzyme A to glucosamine-1-phosphate (GlcN-1-P) to produce N-acetylglucosamine-1-phosphate (GlcNAc-1-P), which is converted into UDP-GlcNAc by the transfer of uridine 5-monophosphate (from uridine 5-triphosphate), a reaction catalyzed by the N-terminal domain. In Streptococcus agalactiae serotype V (strain ATCC BAA-611 / 2603 V/R), this protein is Bifunctional protein GlmU.